A 104-amino-acid polypeptide reads, in one-letter code: Large ribosomal subunit protein uL24 (104 aa).

It belongs to the universal ribosomal protein uL24 family. In terms of assembly, part of the 50S ribosomal subunit.

In terms of biological role, one of two assembly initiator proteins, it binds directly to the 5'-end of the 23S rRNA, where it nucleates assembly of the 50S subunit. One of the proteins that surrounds the polypeptide exit tunnel on the outside of the subunit. In Treponema denticola (strain ATCC 35405 / DSM 14222 / CIP 103919 / JCM 8153 / KCTC 15104), this protein is Large ribosomal subunit protein uL24.